The primary structure comprises 61 residues: Small ribosomal subunit protein uS14 (61 aa).

Zn(2+)-binding residues include C24, C27, C40, and C43.

This sequence belongs to the universal ribosomal protein uS14 family. Zinc-binding uS14 subfamily. In terms of assembly, part of the 30S ribosomal subunit. Contacts proteins S3 and S10. It depends on Zn(2+) as a cofactor.

Functionally, binds 16S rRNA, required for the assembly of 30S particles and may also be responsible for determining the conformation of the 16S rRNA at the A site. In Clostridium botulinum (strain 657 / Type Ba4), this protein is Small ribosomal subunit protein uS14.